Here is a 432-residue protein sequence, read N- to C-terminus: Nuclear pore complex-interacting protein family member B8 (432 aa).

2 disordered regions span residues 260 to 280 and 353 to 420; these read RMGR…NSLS and SPLP…LRTR. A compositionally biased stretch (polar residues) spans 270 to 280; the sequence is QQHSITDNSLS. Residues 374 to 402 are compositionally biased toward basic and acidic residues; it reads EVEKPPKPKRWRVDEVEQSPKPKRQREAE. Basic residues predominate over residues 408–420; the sequence is KPKRRRLSKLRTR.

Belongs to the NPIP family.

The protein is Nuclear pore complex-interacting protein family member B8 (NPIPB8) of Homo sapiens (Human).